The primary structure comprises 431 residues: Glutamate-1-semialdehyde 2,1-aminomutase (431 aa).

Lys-269 is subject to N6-(pyridoxal phosphate)lysine.

The protein belongs to the class-III pyridoxal-phosphate-dependent aminotransferase family. HemL subfamily. As to quaternary structure, homodimer. Requires pyridoxal 5'-phosphate as cofactor.

Its subcellular location is the cytoplasm. The catalysed reaction is (S)-4-amino-5-oxopentanoate = 5-aminolevulinate. It participates in porphyrin-containing compound metabolism; protoporphyrin-IX biosynthesis; 5-aminolevulinate from L-glutamyl-tRNA(Glu): step 2/2. The protein operates within porphyrin-containing compound metabolism; chlorophyll biosynthesis. This is Glutamate-1-semialdehyde 2,1-aminomutase from Chlorobium phaeovibrioides (strain DSM 265 / 1930) (Prosthecochloris vibrioformis (strain DSM 265)).